The following is a 129-amino-acid chain: Lysozyme C (129 aa).

The C-type lysozyme domain occupies 1–129 (KVFSKCELAH…LSEYLASCNL (129 aa)). Intrachain disulfides connect Cys6–Cys127, Cys30–Cys115, Cys65–Cys80, and Cys76–Cys94. Residues Glu35 and Asp53 contribute to the active site. Ca(2+) contacts are provided by Lys82, Asp85, Asn87, Asp90, and Asp91.

This sequence belongs to the glycosyl hydrolase 22 family. In terms of assembly, monomer. The cofactor is Ca(2+).

The enzyme catalyses Hydrolysis of (1-&gt;4)-beta-linkages between N-acetylmuramic acid and N-acetyl-D-glucosamine residues in a peptidoglycan and between N-acetyl-D-glucosamine residues in chitodextrins.. Its function is as follows. Lysozymes have primarily a bacteriolytic function; those in tissues and body fluids are associated with the monocyte-macrophage system and enhance the activity of immunoagents. This chain is Lysozyme C (LYZ), found in Equus asinus (Donkey).